The primary structure comprises 88 residues: Small ribosomal subunit protein bS20 (88 aa).

Residues 1–27 (MANSKSAKKRALQSEKRRQHNASRRSM) form a disordered region.

It belongs to the bacterial ribosomal protein bS20 family.

Binds directly to 16S ribosomal RNA. This is Small ribosomal subunit protein bS20 from Shewanella sediminis (strain HAW-EB3).